The following is a 436-amino-acid chain: ATP-sensitive inward rectifier potassium channel 14 (436 aa).

Residues 1–83 (MGLARALRRL…LSDLFTTCVD (83 aa)) lie on the Cytoplasmic side of the membrane. A disordered region spans residues 14 to 43 (LDSGDSRAGDEEEAGPGLCRNGWAPAPVQS). Position 81 is an S-nitrosocysteine (C81). Residues 84-110 (VRWRWMCLLFSCSFLASWLLFGLAFWL) form a helical membrane-spanning segment. The Extracellular segment spans residues 111–133 (IASLHGDLAAPPPPAPCFSHVAS). Residues 134–150 (FLAAFLFALETQTSIGY) constitute an intramembrane region (helical; Pore-forming). Positions 147–152 (SIGYGV) match the Selectivity filter motif. At 151 to 159 (GVRSVTEEC) the chain is on the extracellular side. A helical membrane pass occupies residues 160–187 (PAAVAAVVLQCIAGCVLDAFVVGAVMAK). The Cytoplasmic portion of the chain corresponds to 188–436 (MAKPKKRNET…TPTLALTLPP (249 aa)). A compositionally biased stretch (acidic residues) spans 400-418 (QEEDEDDETEEGNGVETED). Positions 400–436 (QEEDEDDETEEGNGVETEDGAASPRVLTPTLALTLPP) are disordered. The segment covering 426–436 (LTPTLALTLPP) has biased composition (low complexity).

It belongs to the inward rectifier-type potassium channel (TC 1.A.2.1) family. KCNJ14 subfamily. In terms of tissue distribution, expressed preferentially in retina.

It localises to the membrane. It carries out the reaction K(+)(in) = K(+)(out). With respect to regulation, channel activity is regulated by variations of cytosolic pH; channels are activated by alkaline and inhibited by acidic pH values. Inhibited by Ba(2+) and Cs(+) in a voltage-dependent manner; sensitivity to those inhibitors is lower than in other Kir channels. In terms of biological role, inward rectifier potassium channels are characterized by a greater tendency to allow potassium to flow into the cell rather than out of it. Their voltage dependence is regulated by the concentration of extracellular potassium; as external potassium is raised, the voltage range of the channel opening shifts to more positive voltages. This is ATP-sensitive inward rectifier potassium channel 14 (KCNJ14) from Homo sapiens (Human).